The chain runs to 486 residues: Cardiolipin synthase A (486 aa).

A run of 2 helical transmembrane segments spans residues 3-23 (IFYDLIKWLVVLIYWLLIANI) and 38-58 (MSWLLTIYIIPFIGIAIWFFF). PLD phosphodiesterase domains follow at residues 219–246 (LDVRQHRKIILIDNYISYSGSMNLVDPY) and 399–426 (KKGLLHSKSILIDQQLSLIGTVNLDMRS). Active-site residues include histidine 224, lysine 226, aspartate 231, histidine 404, lysine 406, and aspartate 411.

This sequence belongs to the phospholipase D family. Cardiolipin synthase subfamily. ClsA sub-subfamily.

The protein localises to the cell inner membrane. The catalysed reaction is 2 a 1,2-diacyl-sn-glycero-3-phospho-(1'-sn-glycerol) = a cardiolipin + glycerol. Its function is as follows. Catalyzes the reversible phosphatidyl group transfer from one phosphatidylglycerol molecule to another to form cardiolipin (CL) (diphosphatidylglycerol) and glycerol. This Buchnera aphidicola subsp. Schizaphis graminum (strain Sg) protein is Cardiolipin synthase A.